Consider the following 538-residue polypeptide: CTP synthase (538 aa).

The tract at residues 1-269 (MSPRKYVIVT…ARLVERRLFG (269 aa)) is amidoligase domain. Residue serine 15 coordinates CTP. Position 15 (serine 15) interacts with UTP. 16-21 (SVGKGL) is an ATP binding site. Tyrosine 56 contacts L-glutamine. Aspartate 73 contacts ATP. 2 residues coordinate Mg(2+): aspartate 73 and glutamate 143. CTP contacts are provided by residues 150–152 (DIE), 190–195 (KTKPVQ), and lysine 226. Residues 190 to 195 (KTKPVQ) and lysine 226 contribute to the UTP site. The 245-residue stretch at 294–538 (KVAMVGKYTK…FVTAVARLRG (245 aa)) folds into the Glutamine amidotransferase type-1 domain. Glycine 358 is an L-glutamine binding site. Cysteine 385 serves as the catalytic Nucleophile; for glutamine hydrolysis. Residues 386–389 (FGMQ), glutamate 409, and arginine 466 each bind L-glutamine. Active-site residues include histidine 512 and glutamate 514.

This sequence belongs to the CTP synthase family. In terms of assembly, homotetramer.

The catalysed reaction is UTP + L-glutamine + ATP + H2O = CTP + L-glutamate + ADP + phosphate + 2 H(+). The enzyme catalyses L-glutamine + H2O = L-glutamate + NH4(+). It carries out the reaction UTP + NH4(+) + ATP = CTP + ADP + phosphate + 2 H(+). It participates in pyrimidine metabolism; CTP biosynthesis via de novo pathway; CTP from UDP: step 2/2. Its activity is regulated as follows. Allosterically activated by GTP, when glutamine is the substrate; GTP has no effect on the reaction when ammonia is the substrate. The allosteric effector GTP functions by stabilizing the protein conformation that binds the tetrahedral intermediate(s) formed during glutamine hydrolysis. Inhibited by the product CTP, via allosteric rather than competitive inhibition. In terms of biological role, catalyzes the ATP-dependent amination of UTP to CTP with either L-glutamine or ammonia as the source of nitrogen. Regulates intracellular CTP levels through interactions with the four ribonucleotide triphosphates. The protein is CTP synthase of Aeropyrum pernix (strain ATCC 700893 / DSM 11879 / JCM 9820 / NBRC 100138 / K1).